The chain runs to 654 residues: Arrestin domain-containing protein C (654 aa).

The C2 domain maps to 1 to 105 (MTQRSLKINI…AKRNLMDQWL (105 aa)). Residues 616-647 (AKRIFLKIQQIQSERQKQQEQQEQQVVSNLEA) adopt a coiled-coil conformation.

It belongs to the arrestin family.

The protein is Arrestin domain-containing protein C (adcC) of Dictyostelium discoideum (Social amoeba).